Consider the following 473-residue polypeptide: MGGEIITLQAGQCGNHVGKFLWSQLAKEHAIGTDGLSQLPDSSTERDDDTKPFFRENSRNKFTPRAIMMDSEPSVIADVENTFRGFFDPRNTWVASDGASAGNSWANGYDIGTRNQDDILNKIDKEIDSTDNFEGFQLLHSVAGGTGSGLGSNLLEALCDRYPKKILTTYSVFPARSSEVVVQSYNTILALRRLIEDSDATVVFDNASLLNISGKVFRNPNIDLQHTNQLISTIISSVTNSIRFPSYMYSSMSSIYSTLIPSPELHFLSPSFTPFTSDYIHDDIAHKGHSSYDVMLDLLDPSNSLVSTAMNNPTYFNVYNTIIGNVEPRQISRAMTKLQQRIKFPSWSSSAMHVNIGRRSPYLPLQPNENEVSGMMLSNMSTVVNVFENACNTFDKVFAKGAFLNNYNVGDLFQSMQNVQDEFAESREVVQSLMEDYVAAEQDSYLDDVLVDDENMVGELEEDLDADGDHKLV.

Positions 33–56 (TDGLSQLPDSSTERDDDTKPFFRE) are disordered. Basic and acidic residues predominate over residues 43–56 (STERDDDTKPFFRE). 143–149 (AGGTGSG) serves as a coordination point for GTP.

The protein belongs to the tubulin family. In terms of assembly, interacts with SPC72, SPC97 and SPC98.

The protein resides in the cytoplasm. It is found in the cytoskeleton. It localises to the microtubule organizing center. The protein localises to the spindle pole body. In terms of biological role, tubulin is the major constituent of microtubules. The gamma chain is found at microtubule organizing centers (MTOC) such as the spindle poles or the centrosome, suggesting that it is involved in the minus-end nucleation of microtubule assembly. TUB4 is an important spindle pole body component that organizes both cytoplasmic and nuclear microtubule arrays. The protein is Tubulin gamma chain (TUB4) of Saccharomyces cerevisiae (strain ATCC 204508 / S288c) (Baker's yeast).